The chain runs to 198 residues: Segregation and condensation protein B (198 aa).

The protein belongs to the ScpB family. As to quaternary structure, homodimer. Homodimerization may be required to stabilize the binding of ScpA to the Smc head domains. Component of a cohesin-like complex composed of ScpA, ScpB and the Smc homodimer, in which ScpA and ScpB bind to the head domain of Smc. The presence of the three proteins is required for the association of the complex with DNA.

It is found in the cytoplasm. Functionally, participates in chromosomal partition during cell division. May act via the formation of a condensin-like complex containing Smc and ScpA that pull DNA away from mid-cell into both cell halves. This chain is Segregation and condensation protein B, found in Acetivibrio thermocellus (strain ATCC 27405 / DSM 1237 / JCM 9322 / NBRC 103400 / NCIMB 10682 / NRRL B-4536 / VPI 7372) (Clostridium thermocellum).